A 294-amino-acid polypeptide reads, in one-letter code: Ribosomal RNA small subunit methyltransferase A (294 aa).

S-adenosyl-L-methionine contacts are provided by asparagine 29, valine 31, glycine 56, glutamate 77, aspartate 107, and asparagine 126.

The protein belongs to the class I-like SAM-binding methyltransferase superfamily. rRNA adenine N(6)-methyltransferase family. RsmA subfamily.

The protein resides in the cytoplasm. It catalyses the reaction adenosine(1518)/adenosine(1519) in 16S rRNA + 4 S-adenosyl-L-methionine = N(6)-dimethyladenosine(1518)/N(6)-dimethyladenosine(1519) in 16S rRNA + 4 S-adenosyl-L-homocysteine + 4 H(+). Specifically dimethylates two adjacent adenosines (A1518 and A1519) in the loop of a conserved hairpin near the 3'-end of 16S rRNA in the 30S particle. May play a critical role in biogenesis of 30S subunits. The polypeptide is Ribosomal RNA small subunit methyltransferase A (Mycobacterium sp. (strain MCS)).